The following is a 134-amino-acid chain: Putative pre-16S rRNA nuclease (134 aa).

The protein belongs to the YqgF nuclease family.

The protein localises to the cytoplasm. Could be a nuclease involved in processing of the 5'-end of pre-16S rRNA. This Hydrogenovibrio crunogenus (strain DSM 25203 / XCL-2) (Thiomicrospira crunogena) protein is Putative pre-16S rRNA nuclease.